We begin with the raw amino-acid sequence, 256 residues long: uncharacterized protein (256 aa).

Residues 1-22 (MGYLKRIGMCISLLIVIIFVTS) form the signal peptide. Cysteine 23 carries N-palmitoyl cysteine lipidation. Cysteine 23 is lipidated: S-diacylglycerol cysteine.

It belongs to the staphylococcal tandem lipoprotein family.

The protein resides in the cell membrane. This is an uncharacterized protein from Staphylococcus aureus (strain MSSA476).